A 696-amino-acid chain; its full sequence is Elongation factor G (696 aa).

The region spanning 8-290 (ERYRNIGIMA…AVLDYLPSPL (283 aa)) is the tr-type G domain. GTP-binding positions include 17 to 24 (AHIDAGKT), 88 to 92 (DTPGH), and 142 to 145 (NKMD).

Belongs to the TRAFAC class translation factor GTPase superfamily. Classic translation factor GTPase family. EF-G/EF-2 subfamily.

It localises to the cytoplasm. In terms of biological role, catalyzes the GTP-dependent ribosomal translocation step during translation elongation. During this step, the ribosome changes from the pre-translocational (PRE) to the post-translocational (POST) state as the newly formed A-site-bound peptidyl-tRNA and P-site-bound deacylated tRNA move to the P and E sites, respectively. Catalyzes the coordinated movement of the two tRNA molecules, the mRNA and conformational changes in the ribosome. The sequence is that of Elongation factor G from Nitrosomonas europaea (strain ATCC 19718 / CIP 103999 / KCTC 2705 / NBRC 14298).